The sequence spans 363 residues: 2,5-diketocamphane 1,2-monooxygenase 2 (363 aa).

Residues M74 and 186–194 (TGLTKNSSS) each bind FMN.

Belongs to the bacterial luciferase oxidoreductase family. As to quaternary structure, homodimer. Likely forms a loose transient complex with a P.putida flavin reductase that provides the required FMNH(2) to the enzyme.

The catalysed reaction is (1R,4R)-bornane-2,5-dione + FMNH2 + O2 = (1R,4R)-5-oxo-1,2-campholide + FMN + H2O + H(+). The protein operates within terpene metabolism; (R)-camphor degradation. Functionally, involved in the degradation and assimilation of (+)-camphor, which allows P.putida strain NCIMB 10007 to grow on this enantiomer of camphor as the sole carbon source. Catalyzes the FMNH(2)-dependent lactonization of 2,5-diketocamphane via a Baeyer-Villiger oxidation to produce the unstable lactone 5-oxo-1,2-campholide with (R,R) configuration, that presumably undergoes spontaneous hydrolysis to form 2-oxo-Delta(3)-4,5,5-trimethylcyclopentenylacetate. Is also able to convert (+)-camphor and norcamphor to the corresponding lactone in vitro. Shows no conversion of (-)-camphor, (+)-fenchone, (-)-fenchone, and (+)-nopinone. Acts on other bicyclic ketones and, to a lesser extent, on some 2- and 4-substituted monocyclic ketones. The chain is 2,5-diketocamphane 1,2-monooxygenase 2 from Pseudomonas putida (Arthrobacter siderocapsulatus).